A 166-amino-acid polypeptide reads, in one-letter code: MALGLEDKKAIVAEVNEAAKGALSAVVADSRGVTVGEMTGLRRAAREAGVYVKVVRNTLVKRAVAGTDFECLSDTFTGPTLIAFSNEHPGAAARLLKDFATAQEKFEIKAAAFEGEVIPAADIDRLAKLPTYDEALAQLMMTMKEASAGKFVRLLAALRDQKEEAA.

It belongs to the universal ribosomal protein uL10 family. In terms of assembly, part of the ribosomal stalk of the 50S ribosomal subunit. The N-terminus interacts with L11 and the large rRNA to form the base of the stalk. The C-terminus forms an elongated spine to which L12 dimers bind in a sequential fashion forming a multimeric L10(L12)X complex.

Functionally, forms part of the ribosomal stalk, playing a central role in the interaction of the ribosome with GTP-bound translation factors. This chain is Large ribosomal subunit protein uL10, found in Shewanella woodyi (strain ATCC 51908 / MS32).